The sequence spans 218 residues: Eukaryotic translation initiation factor 3 subunit K (218 aa).

Ala-2 carries the post-translational modification N-acetylalanine. Thr-28 bears the Phosphothreonine mark. The PCI domain maps to 42-204 (YDLEANLAVL…SIKPKNIVEK (163 aa)). The residue at position 217 (Ser-217) is a Phosphoserine.

It belongs to the eIF-3 subunit K family. Component of the eukaryotic translation initiation factor 3 (eIF-3) complex, which is composed of 13 subunits: EIF3A, EIF3B, EIF3C, EIF3D, EIF3E, EIF3F, EIF3G, EIF3H, EIF3I, EIF3J, EIF3K, EIF3L and EIF3M. The eIF-3 complex appears to include 3 stable modules: module A is composed of EIF3A, EIF3B, EIF3G and EIF3I; module B is composed of EIF3F, EIF3H, and EIF3M; and module C is composed of EIF3C, EIF3D, EIF3E, EIF3K and EIF3L. EIF3C of module C binds EIF3B of module A and EIF3H of module B, thereby linking the three modules. EIF3J is a labile subunit that binds to the eIF-3 complex via EIF3B. The eIF-3 complex interacts with RPS6KB1 under conditions of nutrient depletion. Mitogenic stimulation leads to binding and activation of a complex composed of MTOR and RPTOR, leading to phosphorylation and release of RPS6KB1 and binding of EIF4B to eIF-3. Interacts with CCND3, but not with CCND1 and CCND2.

It localises to the nucleus. Its subcellular location is the cytoplasm. Functionally, component of the eukaryotic translation initiation factor 3 (eIF-3) complex, which is required for several steps in the initiation of protein synthesis. The eIF-3 complex associates with the 40S ribosome and facilitates the recruitment of eIF-1, eIF-1A, eIF-2:GTP:methionyl-tRNAi and eIF-5 to form the 43S pre-initiation complex (43S PIC). The eIF-3 complex stimulates mRNA recruitment to the 43S PIC and scanning of the mRNA for AUG recognition. The eIF-3 complex is also required for disassembly and recycling of post-termination ribosomal complexes and subsequently prevents premature joining of the 40S and 60S ribosomal subunits prior to initiation. The eIF-3 complex specifically targets and initiates translation of a subset of mRNAs involved in cell proliferation, including cell cycling, differentiation and apoptosis, and uses different modes of RNA stem-loop binding to exert either translational activation or repression. The sequence is that of Eukaryotic translation initiation factor 3 subunit K from Bos taurus (Bovine).